Reading from the N-terminus, the 556-residue chain is Calcium-dependent protein kinase 5 (556 aa).

A disordered region spans residues 1 to 40 (MGNSCRGSFKDKLDEGDNNKPEDYSKTSTTNLSSNSDHSP). Gly2 is lipidated: N-myristoyl glycine. Residues 8–25 (SFKDKLDEGDNNKPEDYS) show a composition bias toward basic and acidic residues. Residues 26–39 (KTSTTNLSSNSDHS) are compositionally biased toward low complexity. Residues 97 to 355 (YTLSRKLGQG…AHEVLRHPWI (259 aa)) enclose the Protein kinase domain. Residues 103–111 (LGQGQFGTT) and Lys126 contribute to the ATP site. The active-site Proton acceptor is the Asp221. A Phosphoserine modification is found at Ser261. The interval 361 to 391 (APDRALDPAVLSRLKQFSAMNKLKKMALKVI) is autoinhibitory domain. EF-hand domains are found at residues 398 to 433 (EEIA…YGST), 434 to 469 (LKDT…LNKL), 470 to 505 (EREE…HGMA), and 509 to 539 (LEDI…GNAG). Residues Asp411, Asp413, Ser415, Glu422, Asp447, Asp449, Ser451, Thr453, Glu458, Asp483, Asp485, Ser487, Glu494, Asp517, Asn519, Asp521, Lys523, and Glu528 each contribute to the Ca(2+) site.

Belongs to the protein kinase superfamily. Ser/Thr protein kinase family. CDPK subfamily.

The protein resides in the membrane. The catalysed reaction is L-seryl-[protein] + ATP = O-phospho-L-seryl-[protein] + ADP + H(+). The enzyme catalyses L-threonyl-[protein] + ATP = O-phospho-L-threonyl-[protein] + ADP + H(+). Activated by calcium. Autophosphorylation may play an important role in the regulation of the kinase activity. In terms of biological role, may play a role in signal transduction pathways that involve calcium as a second messenger. This chain is Calcium-dependent protein kinase 5 (CPK5), found in Arabidopsis thaliana (Mouse-ear cress).